We begin with the raw amino-acid sequence, 185 residues long: Protein GrpE (185 aa).

The interval 1 to 40 (MSEEKKDEILEQETVETKEEIKTEEAEQKTESLEEKVARL) is disordered.

The protein belongs to the GrpE family. Homodimer.

The protein localises to the cytoplasm. In terms of biological role, participates actively in the response to hyperosmotic and heat shock by preventing the aggregation of stress-denatured proteins, in association with DnaK and GrpE. It is the nucleotide exchange factor for DnaK and may function as a thermosensor. Unfolded proteins bind initially to DnaJ; upon interaction with the DnaJ-bound protein, DnaK hydrolyzes its bound ATP, resulting in the formation of a stable complex. GrpE releases ADP from DnaK; ATP binding to DnaK triggers the release of the substrate protein, thus completing the reaction cycle. Several rounds of ATP-dependent interactions between DnaJ, DnaK and GrpE are required for fully efficient folding. The protein is Protein GrpE of Aliarcobacter butzleri (strain RM4018) (Arcobacter butzleri).